A 375-amino-acid chain; its full sequence is PTS system fructose-specific EIIC component (375 aa).

In terms of domain architecture, PTS EIIC type-2 spans 16–370 (VKEDLMTGVS…KPNFDAKMAA (355 aa)). Transmembrane regions (helical) follow at residues 24–44 (VSFM…GYAV), 68–88 (IGVA…AYAI), 93–113 (GLAP…LQAA), 122–142 (GSAG…GIVA), 160–180 (VLLI…FVLG), 203–223 (AILL…GPIN), 238–258 (VTAP…GLAL), 279–299 (VLLG…ADPA), 301–321 (VIPS…ALGV), and 340–360 (FMFI…ATAI).

It localises to the cell membrane. Its function is as follows. The phosphoenolpyruvate-dependent sugar phosphotransferase system (sugar PTS), a major carbohydrate active transport system, catalyzes the phosphorylation of incoming sugar substrates concomitantly with their translocation across the cell membrane. The enzyme II PtfABC PTS system is involved in fructose transport. The sequence is that of PTS system fructose-specific EIIC component from Haloferax volcanii (strain ATCC 29605 / DSM 3757 / JCM 8879 / NBRC 14742 / NCIMB 2012 / VKM B-1768 / DS2) (Halobacterium volcanii).